The chain runs to 345 residues: S-adenosylmethionine:tRNA ribosyltransferase-isomerase (345 aa).

The protein belongs to the QueA family. Monomer.

It is found in the cytoplasm. It catalyses the reaction 7-aminomethyl-7-carbaguanosine(34) in tRNA + S-adenosyl-L-methionine = epoxyqueuosine(34) in tRNA + adenine + L-methionine + 2 H(+). The protein operates within tRNA modification; tRNA-queuosine biosynthesis. Functionally, transfers and isomerizes the ribose moiety from AdoMet to the 7-aminomethyl group of 7-deazaguanine (preQ1-tRNA) to give epoxyqueuosine (oQ-tRNA). This Helicobacter pylori (strain HPAG1) protein is S-adenosylmethionine:tRNA ribosyltransferase-isomerase.